The chain runs to 687 residues: Pentatricopeptide repeat-containing protein At3g09060 (687 aa).

PPR repeat units follow at residues 42–76, 77–107, 113–147, 148–182, 183–217, 218–253, 254–288, 289–323, 324–358, 359–392, 393–427, 428–462, 463–497, 498–532, 533–567, 568–602, 603–637, and 638–672; these read SAVVYHHILRRLSETRMVNHVSRIVELIRSQECKC, DEDVALSVIKTYGKNSMPDQALDVFKRMREI, AIRSYNTLLNAFVEAKQWVKVESLFAYFETAGVAP, NLQTYNVLIKMSCKKKEFEKARGFLDWMWKEGFKP, DVFSYSTVINDLAKAGKLDDALELFDEMSERGVAP, DVTCYNILIDGFLKEKDHKTAMELWDRLLEDSSVYP, NVKTHNIMISGLSKCGRVDDCLKIWERMKQNEREK, DLYTYSSLIHGLCDAGNVDKAESVFNELDERKASI, DVVTYNTMLGGFCRCGKIKESLELWRIMEHKNSVN, IVSYNILIKGLLENGKIDEATMIWRLMPAKGYAA, DKTTYGIFIHGLCVNGYVNKALGVMQEVESSGGHL, DVYAYASIIDCLCKKKRLEEASNLVKEMSKHGVEL, NSHVCNALIGGLIRDSRLGEASFFLREMGKNGCRP, TVVSYNILICGLCKAGKFGEASAFVKEMLENGWKP, DLKTYSILLCGLCRDRKIDLALELWHQFLQSGLET, DVMMHNILIHGLCSVGKLDDAMTVMANMEHRNCTA, NLVTYNTLMEGFFKVGDSNRATVIWGYMYKMGLQP, and DIISYNTIMKGLCMCRGVSYAMEFFDDARNHGIFP.

It belongs to the PPR family. P subfamily.

The sequence is that of Pentatricopeptide repeat-containing protein At3g09060 from Arabidopsis thaliana (Mouse-ear cress).